Consider the following 82-residue polypeptide: UPF0180 protein BALH_1248 (82 aa).

The protein belongs to the UPF0180 family.

The sequence is that of UPF0180 protein BALH_1248 from Bacillus thuringiensis (strain Al Hakam).